Consider the following 597-residue polypeptide: DNA mismatch repair protein MutL (597 aa).

This sequence belongs to the DNA mismatch repair MutL/HexB family.

In terms of biological role, this protein is involved in the repair of mismatches in DNA. It is required for dam-dependent methyl-directed DNA mismatch repair. May act as a 'molecular matchmaker', a protein that promotes the formation of a stable complex between two or more DNA-binding proteins in an ATP-dependent manner without itself being part of a final effector complex. The protein is DNA mismatch repair protein MutL of Rhodopseudomonas palustris (strain HaA2).